We begin with the raw amino-acid sequence, 291 residues long: Putative transport permease ycf38 (291 aa).

The next 6 membrane-spanning stretches (helical) occupy residues 47–67 (ATLM…GGLF), 87–107 (SGII…PLMF), 135–155 (FMTC…LFMG), 165–185 (MIFG…SLAL), 195–215 (LLAF…ALAP), and 262–282 (ICLG…AYLV). Positions 47–289 (ATLMAGIIQP…YLVSNILKAK (243 aa)) constitute an ABC transmembrane type-2 domain.

This sequence belongs to the ABC-2 integral membrane protein family.

The protein resides in the plastid. It localises to the chloroplast membrane. This chain is Putative transport permease ycf38 (ycf38), found in Pyropia yezoensis (Susabi-nori).